Consider the following 134-residue polypeptide: DNA-directed RNA polymerase subunit omega (134 aa).

It belongs to the RNA polymerase subunit omega family. In terms of assembly, the RNAP catalytic core consists of 2 alpha, 1 beta, 1 beta' and 1 omega subunit. When a sigma factor is associated with the core the holoenzyme is formed, which can initiate transcription.

It carries out the reaction RNA(n) + a ribonucleoside 5'-triphosphate = RNA(n+1) + diphosphate. Its function is as follows. Promotes RNA polymerase assembly. Latches the N- and C-terminal regions of the beta' subunit thereby facilitating its interaction with the beta and alpha subunits. The sequence is that of DNA-directed RNA polymerase subunit omega from Rhizobium johnstonii (strain DSM 114642 / LMG 32736 / 3841) (Rhizobium leguminosarum bv. viciae).